The following is a 279-amino-acid chain: Oxygen-dependent coproporphyrinogen-III oxidase (279 aa).

Substrate is bound at residue serine 102. A divalent metal cation contacts are provided by histidine 106 and histidine 116. Catalysis depends on histidine 116, which acts as the Proton donor. Residue asparagine 118 to arginine 120 coordinates substrate. 2 residues coordinate a divalent metal cation: histidine 149 and histidine 179. Residues tyrosine 244–asparagine 279 are important for dimerization.

This sequence belongs to the aerobic coproporphyrinogen-III oxidase family. Homodimer. The cofactor is a divalent metal cation.

The protein resides in the cytoplasm. It catalyses the reaction coproporphyrinogen III + O2 + 2 H(+) = protoporphyrinogen IX + 2 CO2 + 2 H2O. It participates in porphyrin-containing compound metabolism; protoporphyrin-IX biosynthesis; protoporphyrinogen-IX from coproporphyrinogen-III (O2 route): step 1/1. Functionally, involved in the heme biosynthesis. Catalyzes the aerobic oxidative decarboxylation of propionate groups of rings A and B of coproporphyrinogen-III to yield the vinyl groups in protoporphyrinogen-IX. This Rickettsia typhi (strain ATCC VR-144 / Wilmington) protein is Oxygen-dependent coproporphyrinogen-III oxidase.